The sequence spans 282 residues: Bifunctional protein FolD (282 aa).

NADP(+) contacts are provided by residues 166 to 168 and serine 191; that span reads GRS.

This sequence belongs to the tetrahydrofolate dehydrogenase/cyclohydrolase family. Homodimer.

It carries out the reaction (6R)-5,10-methylene-5,6,7,8-tetrahydrofolate + NADP(+) = (6R)-5,10-methenyltetrahydrofolate + NADPH. It catalyses the reaction (6R)-5,10-methenyltetrahydrofolate + H2O = (6R)-10-formyltetrahydrofolate + H(+). The protein operates within one-carbon metabolism; tetrahydrofolate interconversion. Its function is as follows. Catalyzes the oxidation of 5,10-methylenetetrahydrofolate to 5,10-methenyltetrahydrofolate and then the hydrolysis of 5,10-methenyltetrahydrofolate to 10-formyltetrahydrofolate. The polypeptide is Bifunctional protein FolD (Acidovorax sp. (strain JS42)).